Consider the following 283-residue polypeptide: NFU1 iron-sulfur cluster scaffold homolog, mitochondrial (283 aa).

Residues M1–R65 constitute a mitochondrion transit peptide. Positions I182–V250 are nifU. Residues C219 and C222 each coordinate [4Fe-4S] cluster.

The protein belongs to the NifU family.

It is found in the mitochondrion. Functionally, molecular scaffold for [Fe-S] cluster assembly of mitochondrial iron-sulfur proteins. The chain is NFU1 iron-sulfur cluster scaffold homolog, mitochondrial from Drosophila sechellia (Fruit fly).